Consider the following 291-residue polypeptide: Nucleotide-binding protein lmo2474 (291 aa).

13 to 20 provides a ligand contact to ATP; that stretch reads GMSGAGKT. 63–66 is a GTP binding site; that stretch reads DLRG.

It belongs to the RapZ-like family.

In terms of biological role, displays ATPase and GTPase activities. The sequence is that of Nucleotide-binding protein lmo2474 from Listeria monocytogenes serovar 1/2a (strain ATCC BAA-679 / EGD-e).